We begin with the raw amino-acid sequence, 248 residues long: MTSARTPRRKTVAGASAQQVGLNFETPDDIVCGVDEAGRGPLAGPVVAAAVIFDPAKPMIRGLDDSKVLTAKKRDELYDKIVDRALAYCIASASVEEIDSLNILHATMLAMKRAVEGLSVVPTLVKIDGNRCPTLSVRSEAVIGGDALVKSISAASILAKVTRDRMLLELHQAHPVYGFNAHAGYGTPQHLAALREHGPCEHHRRSFAPVREAHLRLGTGVPLPAGNVIVVSEVMLDDDAFGERSGAA.

The 191-residue stretch at 29 to 219 (DIVCGVDEAG…VREAHLRLGT (191 aa)) folds into the RNase H type-2 domain. Asp-35, Glu-36, and Asp-128 together coordinate a divalent metal cation.

The protein belongs to the RNase HII family. It depends on Mn(2+) as a cofactor. The cofactor is Mg(2+).

It localises to the cytoplasm. It catalyses the reaction Endonucleolytic cleavage to 5'-phosphomonoester.. Endonuclease that specifically degrades the RNA of RNA-DNA hybrids. The sequence is that of Ribonuclease HII from Paraburkholderia xenovorans (strain LB400).